The following is a 54-amino-acid chain: MSPKTETKASVGFKAGVKEYKLTYYTPEYETKDTDTLAALRVTPQPGVPPEEAG.

A propeptide spanning residues 1-2 is cleaved from the precursor; it reads MS. An N-acetylproline modification is found at Pro3. Lys14 bears the N6,N6,N6-trimethyllysine mark.

This sequence belongs to the RuBisCO large chain family. Type I subfamily. Heterohexadecamer of 8 large chains and 8 small chains.

The protein resides in the plastid. It localises to the chloroplast. It carries out the reaction 2 (2R)-3-phosphoglycerate + 2 H(+) = D-ribulose 1,5-bisphosphate + CO2 + H2O. The enzyme catalyses D-ribulose 1,5-bisphosphate + O2 = 2-phosphoglycolate + (2R)-3-phosphoglycerate + 2 H(+). RuBisCO catalyzes two reactions: the carboxylation of D-ribulose 1,5-bisphosphate, the primary event in carbon dioxide fixation, as well as the oxidative fragmentation of the pentose substrate in the photorespiration process. Both reactions occur simultaneously and in competition at the same active site. This is Ribulose bisphosphate carboxylase large chain (rbcL) from Magnolia liliiflora (Mulan magnolia).